The following is a 312-amino-acid chain: Homoserine O-succinyltransferase (312 aa).

Residue cysteine 142 is the Acyl-thioester intermediate of the active site. 2 residues coordinate substrate: lysine 163 and serine 192. Residue histidine 235 is the Proton acceptor of the active site. Residue glutamate 237 is part of the active site. Arginine 249 contributes to the substrate binding site.

Belongs to the MetA family.

It localises to the cytoplasm. The catalysed reaction is L-homoserine + succinyl-CoA = O-succinyl-L-homoserine + CoA. The protein operates within amino-acid biosynthesis; L-methionine biosynthesis via de novo pathway; O-succinyl-L-homoserine from L-homoserine: step 1/1. Transfers a succinyl group from succinyl-CoA to L-homoserine, forming succinyl-L-homoserine. The sequence is that of Homoserine O-succinyltransferase from Alteromonas mediterranea (strain DSM 17117 / CIP 110805 / LMG 28347 / Deep ecotype).